A 250-amino-acid chain; its full sequence is 3-deoxy-manno-octulosonate cytidylyltransferase (250 aa).

Belongs to the KdsB family.

It localises to the cytoplasm. The catalysed reaction is 3-deoxy-alpha-D-manno-oct-2-ulosonate + CTP = CMP-3-deoxy-beta-D-manno-octulosonate + diphosphate. It functions in the pathway nucleotide-sugar biosynthesis; CMP-3-deoxy-D-manno-octulosonate biosynthesis; CMP-3-deoxy-D-manno-octulosonate from 3-deoxy-D-manno-octulosonate and CTP: step 1/1. Its pathway is bacterial outer membrane biogenesis; lipopolysaccharide biosynthesis. In terms of biological role, activates KDO (a required 8-carbon sugar) for incorporation into bacterial lipopolysaccharide in Gram-negative bacteria. This is 3-deoxy-manno-octulosonate cytidylyltransferase from Legionella pneumophila subsp. pneumophila (strain Philadelphia 1 / ATCC 33152 / DSM 7513).